A 602-amino-acid polypeptide reads, in one-letter code: UvrABC system protein C (602 aa).

Residues 17–94 (TTSGCYKMYS…IKEHKPDYNI (78 aa)) form the GIY-YIG domain. Residues 199–234 (SKLLDEIEIKMKEVIKREDFESAIKLKETKRSLIEI) form the UVR domain.

Belongs to the UvrC family. Interacts with UvrB in an incision complex.

It localises to the cytoplasm. In terms of biological role, the UvrABC repair system catalyzes the recognition and processing of DNA lesions. UvrC both incises the 5' and 3' sides of the lesion. The N-terminal half is responsible for the 3' incision and the C-terminal half is responsible for the 5' incision. This is UvrABC system protein C from Borrelia turicatae (strain 91E135).